Consider the following 56-residue polypeptide: Large ribosomal subunit protein bL33 (56 aa).

Belongs to the bacterial ribosomal protein bL33 family.

This chain is Large ribosomal subunit protein bL33 (rpmG), found in Rickettsia prowazekii (strain Madrid E).